Reading from the N-terminus, the 195-residue chain is uncharacterized protein (195 aa).

Disordered regions lie at residues Met-1–Ile-54 and Leu-173–Ser-195. The span at Lys-7–Lys-20 shows a compositional bias: basic and acidic residues. Over residues Gln-45–Ile-54 the composition is skewed to polar residues. A coiled-coil region spans residues Ser-48–Gly-97.

Belongs to the TPD52 family.

This is an uncharacterized protein from Caenorhabditis elegans.